Here is a 340-residue protein sequence, read N- to C-terminus: Ferrochelatase (340 aa).

Positions 189 and 292 each coordinate Fe cation.

This sequence belongs to the ferrochelatase family.

The protein resides in the cytoplasm. The enzyme catalyses heme b + 2 H(+) = protoporphyrin IX + Fe(2+). The protein operates within porphyrin-containing compound metabolism; protoheme biosynthesis; protoheme from protoporphyrin-IX: step 1/1. Its function is as follows. Catalyzes the ferrous insertion into protoporphyrin IX. In Pseudomonas savastanoi pv. phaseolicola (strain 1448A / Race 6) (Pseudomonas syringae pv. phaseolicola (strain 1448A / Race 6)), this protein is Ferrochelatase.